The following is a 254-amino-acid chain: Hydroxyethylthiazole kinase (254 aa).

Methionine 40 provides a ligand contact to substrate. ATP contacts are provided by arginine 116 and serine 162. Glycine 189 is a binding site for substrate.

It belongs to the Thz kinase family. Requires Mg(2+) as cofactor.

It carries out the reaction 5-(2-hydroxyethyl)-4-methylthiazole + ATP = 4-methyl-5-(2-phosphooxyethyl)-thiazole + ADP + H(+). The protein operates within cofactor biosynthesis; thiamine diphosphate biosynthesis; 4-methyl-5-(2-phosphoethyl)-thiazole from 5-(2-hydroxyethyl)-4-methylthiazole: step 1/1. Functionally, catalyzes the phosphorylation of the hydroxyl group of 4-methyl-5-beta-hydroxyethylthiazole (THZ). The chain is Hydroxyethylthiazole kinase from Limosilactobacillus fermentum (strain NBRC 3956 / LMG 18251) (Lactobacillus fermentum).